A 610-amino-acid chain; its full sequence is MCGIVGAVAQRDVAEILVEGLRRLEYRGYDSAGVAIVDAEANLTRIRRLGKVQELADAVDEAKVVGGTGIAHTRWATHGEPSEINAHPHMSGDITVVHNGIIENHEELRELLQSRGYVFESQTDTEVIAHMVEWELRTAESLLEAVQKTAKQLEGAYGTVAMDRKDPSRIVVARSGSPIVIGFGVGENFLASDQLALLNVTRRFMYLEEGDVAEITRRDVTVFDVTGERVEREITESNAEHDAGDKGQYRHFMQKEIYEQPKALINTMEGRITADSVVTDAIGVHAADILSKVEHVQIVACGTSYNAGMTARYWFEDIAGVSCDVEIASEFRYRKFVTRPNSLLITLSQSGETADTLAALRLAKEKGYMAAMTICNVAGSSLVRESDFAFMTRAGVEIGVASTKAFTTQLSALLMLVTALGKEQGRISKEKEKEIVEALHALPKQINAALSFEKEIEALATDFADKHHTLFLGRGEFYPIAMEASLKLKEISYIHAEAYAAGELKHGPLALIDADMPVVVVAPSNDLLEKLKSNVEEVRARGGLLYVFADADAGFEGDETMKIITMPHVSEITAAIYYTIPMQLLSYYVALIKGTDVDQPRNLAKAVTVE.

C2 acts as the Nucleophile; for GATase activity in catalysis. Residues 2-218 form the Glutamine amidotransferase type-2 domain; sequence CGIVGAVAQR…EGDVAEITRR (217 aa). 2 consecutive SIS domains span residues 286 to 426 and 459 to 600; these read AADI…EQGR and LATD…VDQP. K605 serves as the catalytic For Fru-6P isomerization activity.

Homodimer.

It is found in the cytoplasm. The catalysed reaction is D-fructose 6-phosphate + L-glutamine = D-glucosamine 6-phosphate + L-glutamate. Its function is as follows. Catalyzes the first step in hexosamine metabolism, converting fructose-6P into glucosamine-6P using glutamine as a nitrogen source. This chain is Glutamine--fructose-6-phosphate aminotransferase [isomerizing], found in Vibrio parahaemolyticus serotype O3:K6 (strain RIMD 2210633).